The sequence spans 153 residues: Cytochrome c-type biogenesis protein CcmE (153 aa).

The Cytoplasmic portion of the chain corresponds to 1–8 (MMTPRQRR). A helical; Signal-anchor for type II membrane protein transmembrane segment spans residues 9 to 29 (MTWVALMVAGVSLAAFFALTA). The Periplasmic portion of the chain corresponds to 30-153 (FQKNLLYFYT…PADYSEYRKK (124 aa)). Heme is bound by residues His124 and Tyr128. The disordered stretch occupies residues 134–153 (AESLKKNGGLPADYSEYRKK).

Belongs to the CcmE/CycJ family.

Its subcellular location is the cell inner membrane. In terms of biological role, heme chaperone required for the biogenesis of c-type cytochromes. Transiently binds heme delivered by CcmC and transfers the heme to apo-cytochromes in a process facilitated by CcmF and CcmH. The sequence is that of Cytochrome c-type biogenesis protein CcmE from Methylococcus capsulatus (strain ATCC 33009 / NCIMB 11132 / Bath).